We begin with the raw amino-acid sequence, 1237 residues long: Anion exchange protein 2 (1237 aa).

The disordered stretch occupies residues 1-238 (MSSAPRRPAS…YNLQERRRIG (238 aa)). The Cytoplasmic segment spans residues 1–703 (MSSAPRRPAS…SDFRDALDPQ (703 aa)). 2 stretches are compositionally biased toward basic and acidic residues: residues 38-48 (LRTLGVERFEE) and 57-74 (GGEE…EYHR). Composition is skewed to basic residues over residues 75-84 (QSSHHIHHPL) and 93-109 (RRRK…RRRP). Ser112, Ser131, Ser144, Ser170, Ser172, and Ser239 each carry phosphoserine. The span at 119–132 (TIEEGEEDEEEASE) shows a compositional bias: acidic residues. Thr253 is modified (phosphothreonine). At Lys270 the chain carries N6-methyllysine. Residues 285–316 (VRKNAKGSTQAAREGREPGPTPRARPRAPHKP) are disordered. Ser439 carries the post-translational modification Phosphoserine. The interval 445–466 (SLLGHHHAQGTESDPHVTEPLI) is disordered. 4 helical membrane passes run 704 to 727 (CLAA…GLLG), 733 to 770 (LIGV…LLVF), 790 to 812 (VWIG…SFLV), and 822 to 843 (IFAF…IKIF). Positions 704–1237 (CLAAVIFIYF…DEYNEMPMPV (534 aa)) are membrane (anion exchange). Over 844-896 (QEHPLHGCSGSNDSEAGSSSSSNMTWATTILVPDNSSASGQSGQEKPRGQPNT) the chain is Extracellular. Asn855, Asn866, and Asn878 each carry an N-linked (GlcNAc...) asparagine glycan. Residues 897–914 (ALLSLVLMAGTFFIAFFL) traverse the membrane as a helical segment. The Cytoplasmic portion of the chain corresponds to 915-929 (RKFKNSRFFPGRIRR). Helical transmembrane passes span 930 to 950 (VIGD…DYSI), 984 to 1006 (PFPV…LIFM), 1032 to 1053 (LLLI…LAAA), 1087 to 1132 (VTGL…IQFY), and 1159 to 1195 (MHLF…TVPL). Cys1169 carries the S-palmitoyl cysteine lipid modification.

It belongs to the anion exchanger (TC 2.A.31) family. Expressed in the choroid plexus epithelium (at protein level). Expressed in the parotid gland and sublingual salivary gland acinar cells (at protein level). In terms of tissue distribution, widely expressed at similar levels in all tissues examined. Expressed in the testis. As to expression, predominantly expressed in stomach although they are also detected at lower levels in other tissues. Expressed in the testis. Stomach-specific. In terms of tissue distribution, expressed at slightly higher levels in lung and stomach than in other tissues.

It is found in the apical cell membrane. Its subcellular location is the basolateral cell membrane. The catalysed reaction is hydrogencarbonate(in) + chloride(out) = hydrogencarbonate(out) + chloride(in). With respect to regulation, inhibited by 4,4'-diisothiocyanatostilbene-2,2'-disulfonic acid (DIDS) and acetazolamide. Muscarinic receptor stimulation enhances activity through a Ca(2+)-dependent mechanism. In terms of biological role, sodium-independent anion exchanger which mediates the electroneutral exchange of chloride for bicarbonate ions across the cell membrane. Plays an important role in osteoclast differentiation and function. Regulates bone resorption and calpain-dependent actin cytoskeleton organization in osteoclasts via anion exchange-dependent control of pH. Essential for intracellular pH regulation in CD8(+) T-cells upon CD3 stimulation, modulating CD8(+) T-cell responses. Functionally, plays a critical role in male fertility and spermiogenesis. The polypeptide is Anion exchange protein 2 (Slc4a2) (Mus musculus (Mouse)).